The sequence spans 139 residues: uncharacterized protein (139 aa).

A helical membrane pass occupies residues F43–L59.

It is found in the membrane. This is an uncharacterized protein from Haemophilus influenzae (strain ATCC 51907 / DSM 11121 / KW20 / Rd).